Reading from the N-terminus, the 425-residue chain is Elongation factor 1-alpha (425 aa).

Residues 5–221 (KPHINLAVIG…DELEVPDKPT (217 aa)) form the tr-type G domain. Positions 14–21 (GHIDHGKS) are G1. GTP is bound at residue 14–21 (GHIDHGKS). Ser21 is a Mg(2+) binding site. Positions 70-74 (GITID) are G2. The tract at residues 91–94 (DCPG) is G3. Residues 91–95 (DCPGH) and 146–149 (NKMD) each bind GTP. The segment at 146–149 (NKMD) is G4. A G5 region spans residues 185–187 (SAF).

The protein belongs to the TRAFAC class translation factor GTPase superfamily. Classic translation factor GTPase family. EF-Tu/EF-1A subfamily.

The protein localises to the cytoplasm. It carries out the reaction GTP + H2O = GDP + phosphate + H(+). In terms of biological role, GTP hydrolase that promotes the GTP-dependent binding of aminoacyl-tRNA to the A-site of ribosomes during protein biosynthesis. The polypeptide is Elongation factor 1-alpha (Methanospirillum hungatei JF-1 (strain ATCC 27890 / DSM 864 / NBRC 100397 / JF-1)).